A 547-amino-acid polypeptide reads, in one-letter code: Probable hydroxyacid-oxoacid transhydrogenase, mitochondrial (547 aa).

Belongs to the iron-containing alcohol dehydrogenase family. Hydroxyacid-oxoacid transhydrogenase subfamily.

The protein resides in the mitochondrion. It carries out the reaction (S)-3-hydroxybutanoate + 2-oxoglutarate = (R)-2-hydroxyglutarate + acetoacetate. The enzyme catalyses 4-hydroxybutanoate + 2-oxoglutarate = (R)-2-hydroxyglutarate + succinate semialdehyde. Its function is as follows. Catalyzes the cofactor-independent reversible oxidation of gamma-hydroxybutyrate (GHB) to succinic semialdehyde (SSA) coupled to reduction of 2-ketoglutarate (2-KG) to D-2-hydroxyglutarate (D-2-HG). L-3-hydroxybutyrate (L-3-OHB) is also a substrate for HOT when using 2-KG as hydrogen acceptor, resulting in the formation of D-2-HG. This is Probable hydroxyacid-oxoacid transhydrogenase, mitochondrial (adhfe1) from Dictyostelium discoideum (Social amoeba).